The chain runs to 997 residues: MAVAGFVFCRPLFGLAIVLLVAPIDAAQRHTASDNPSTYNIGGVLSNSDSEEHFSTTIKHLNFDQQYVPRKVTYYDKTIRMDKNPIKTVFNVCDKLIENRVYAVVVSHEQTSGDLSPAAVSYTSGFYSIPVIGISSRDAAFSDKNIHVSFLRTVPPYYHQADVWLEMLSHFAYTKVIIIHSSDTDGRAILGRFQTTSQTYYDDVDVRATVELIVEFEPKLESFTEHLIDMKTAQSRVYLMYASTEDAQVIFRDAGEYNMTGEGHVWIVTEQALFSNNTPDGVLGLQLEHAHSDKGHIRDSVYVLASAIKEMISNETIAEAPKDCGDSAVNWESGKRLFQYLKSRNITGETGQVAFDDNGDRIYAGYDVINIREQQKKHVVGKFSYDSMRAKMRMRINDSEIIWPGKQRRKPEGIMIPTHLKLLTIEEKPFVYVRRMGDDEFRCEPDERPCPLFNNSDATANEFCCRGYCIDLLIELSKRINFTYDLALSPDGQFGHYILRNSTGAMTLRKEWTGLIGELVNERADMIVAPLTINPERAEYIEFSKPFKYQGITILEKKPSRSSTLVSFLQPFSNTLWILVMVSVHVVALVLYLLDRFSPFGRFKLSHSDSNEEKALNLSSAVWFAWGVLLNSGIGEGTPRSFSARVLGMVWAGFAMIIVASYTANLAAFLVLERPKTKLSGINDARLRNTMENLTCATVKGSSVDMYFRRQVELSNMYRTMEANNYATAEQAIQDVKKGKLMAFIWDSSRLEYEASKDCELVTAGELFGRSGYGIGLQKGSPWTDAVTLAILEFHESGFMEKLDKQWIFHGHVQQNCELFEKTPNTLGLKNMAGVFILVGVGIAGGVGLIIIEVIYKKHQVKKQKRLDIARHAADKWRGTIEKRKTIRASLAMQRQYNVGLNSTHAPGTISLAVDKRRYPRLGQRLGPERAWPGDAADVLRIRRPYELGKPGQSPKVMAANQPGMPMPMLGKTRPQQSVLPPRYSPGYTSDVSHLVV.

Positions 1–26 (MAVAGFVFCRPLFGLAIVLLVAPIDA) are cleaved as a signal peptide. Residues 27–573 (AQRHTASDNP…TLVSFLQPFS (547 aa)) are Extracellular-facing. N-linked (GlcNAc...) asparagine glycosylation is found at Asn-258, Asn-314, Asn-345, Asn-397, Asn-454, Asn-481, and Asn-501. Residues 530–532 (PLT) and Arg-537 contribute to the glycine site. A helical membrane pass occupies residues 574–594 (NTLWILVMVSVHVVALVLYLL). At 595–651 (DRFSPFGRFKLSHSDSNEEKALNLSSAVWFAWGVLLNSGIGEGTPRSFSARVLGMVW) the chain is on the cytoplasmic side. The helical transmembrane segment at 652 to 672 (AGFAMIIVASYTANLAAFLVL) threads the bilayer. Residues 673-831 (ERPKTKLSGI…KTPNTLGLKN (159 aa)) lie on the Extracellular side of the membrane. An N-linked (GlcNAc...) asparagine glycan is attached at Asn-693. Glycine-binding residues include Ser-703 and Asp-747. The chain crosses the membrane as a helical span at residues 832-852 (MAGVFILVGVGIAGGVGLIII). The Cytoplasmic segment spans residues 853 to 997 (EVIYKKHQVK…YTSDVSHLVV (145 aa)). Residues 970–997 (LGKTRPQQSVLPPRYSPGYTSDVSHLVV) form a disordered region. Polar residues predominate over residues 987–997 (GYTSDVSHLVV).

The protein belongs to the glutamate-gated ion channel (TC 1.A.10.1) family. In terms of assembly, forms a heteromeric NMDA channel with Nmdar2.

Its subcellular location is the cell membrane. It localises to the postsynaptic cell membrane. It is found in the postsynaptic density. NMDA receptor subtype of glutamate-gated ion channels with high calcium permeability and voltage-dependent sensitivity to magnesium. Mediated by glycine. This protein plays a key role in synaptic plasticity, synaptogenesis, excitotoxicity, memory acquisition and learning. It mediates neuronal functions in glutamate neurotransmission. Is involved in the cell surface targeting of NMDA receptors. Plays a role in associative learning and in long-term memory consolidation. This chain is Glutamate [NMDA] receptor subunit 1, found in Drosophila sechellia (Fruit fly).